The sequence spans 96 residues: Co-chaperonin GroES (96 aa).

It belongs to the GroES chaperonin family. In terms of assembly, heptamer of 7 subunits arranged in a ring. Interacts with the chaperonin GroEL.

The protein resides in the cytoplasm. Together with the chaperonin GroEL, plays an essential role in assisting protein folding. The GroEL-GroES system forms a nano-cage that allows encapsulation of the non-native substrate proteins and provides a physical environment optimized to promote and accelerate protein folding. GroES binds to the apical surface of the GroEL ring, thereby capping the opening of the GroEL channel. This Verminephrobacter eiseniae (strain EF01-2) protein is Co-chaperonin GroES.